A 285-amino-acid polypeptide reads, in one-letter code: Bifunctional protein FolD (285 aa).

NADP(+)-binding positions include 166–168 and Ile-232; that span reads GAS.

The protein belongs to the tetrahydrofolate dehydrogenase/cyclohydrolase family. Homodimer.

It carries out the reaction (6R)-5,10-methylene-5,6,7,8-tetrahydrofolate + NADP(+) = (6R)-5,10-methenyltetrahydrofolate + NADPH. The enzyme catalyses (6R)-5,10-methenyltetrahydrofolate + H2O = (6R)-10-formyltetrahydrofolate + H(+). The protein operates within one-carbon metabolism; tetrahydrofolate interconversion. Its function is as follows. Catalyzes the oxidation of 5,10-methylenetetrahydrofolate to 5,10-methenyltetrahydrofolate and then the hydrolysis of 5,10-methenyltetrahydrofolate to 10-formyltetrahydrofolate. This chain is Bifunctional protein FolD, found in Buchnera aphidicola subsp. Schizaphis graminum (strain Sg).